The following is a 145-amino-acid chain: Mannitol-specific phosphotransferase enzyme IIA component (145 aa).

One can recognise a PTS EIIA type-2 domain in the interval 4-143 (TILSTETIKV…QEVLAFLGEV (140 aa)). His-64 (tele-phosphohistidine intermediate) is an active-site residue. His-64 is subject to Phosphohistidine; by HPr.

Its subcellular location is the cytoplasm. Functionally, the phosphoenolpyruvate-dependent sugar phosphotransferase system (sugar PTS), a major carbohydrate active transport system, catalyzes the phosphorylation of incoming sugar substrates concomitantly with their translocation across the cell membrane. The enzyme II CmtAB PTS system is involved in D-mannitol transport. The sequence is that of Mannitol-specific phosphotransferase enzyme IIA component (mtlF) from Halalkalibacterium halodurans (strain ATCC BAA-125 / DSM 18197 / FERM 7344 / JCM 9153 / C-125) (Bacillus halodurans).